The chain runs to 563 residues: Arginine--tRNA ligase (563 aa).

Residues 120-130 carry the 'HIGH' region motif; the sequence is PNIAKPFHVGH.

This sequence belongs to the class-I aminoacyl-tRNA synthetase family. Monomer.

Its subcellular location is the cytoplasm. It catalyses the reaction tRNA(Arg) + L-arginine + ATP = L-arginyl-tRNA(Arg) + AMP + diphosphate. The sequence is that of Arginine--tRNA ligase from Clostridium beijerinckii (strain ATCC 51743 / NCIMB 8052) (Clostridium acetobutylicum).